Here is a 58-residue protein sequence, read N- to C-terminus: MAGPESDAQYQFTGIKKYFNSYTLTGRMNCVLATYGSIALIVLYFKLRSKKTPAVKAT.

Residues Lys-16 and Lys-17 each carry the N6-acetyllysine modification. The helical transmembrane segment at 23–45 (TLTGRMNCVLATYGSIALIVLYF) threads the bilayer.

Component of the ATP synthase complex composed at least of ATP5F1A/subunit alpha, ATP5F1B/subunit beta, ATP5MC1/subunit c (homooctomer), MT-ATP6/subunit a, MT-ATP8/subunit 8, ATP5ME/subunit e, ATP5MF/subunit f, ATP5MG/subunit g, ATP5MK/subunit k, ATP5MJ/subunit j, ATP5F1C/subunit gamma, ATP5F1D/subunit delta, ATP5F1E/subunit epsilon, ATP5PF/subunit F6, ATP5PB/subunit b, ATP5PD/subunit d, ATP5PO/subunit OSCP. ATP synthase complex consists of a soluble F(1) head domain (subunits alpha(3) and beta(3)) - the catalytic core - and a membrane F(0) domain - the membrane proton channel (subunits c, a, 8, e, f, g, k and j). These two domains are linked by a central stalk (subunits gamma, delta, and epsilon) rotating inside the F1 region and a stationary peripheral stalk (subunits F6, b, d, and OSCP). The ATP synthase complex/complex V exists as a monomeric and a dimeric supercomplex that helps shape mitochondrial cristae to optimize proton flow.

It is found in the mitochondrion membrane. In terms of biological role, subunit k, of the mitochondrial membrane ATP synthase complex (F(1)F(0) ATP synthase or Complex V) that produces ATP from ADP in the presence of a proton gradient across the membrane which is generated by electron transport complexes of the respiratory chain. ATP synthase complex consist of a soluble F(1) head domain - the catalytic core - and a membrane F(1) domain - the membrane proton channel. These two domains are linked by a central stalk rotating inside the F(1) region and a stationary peripheral stalk. During catalysis, ATP synthesis in the catalytic domain of F(1) is coupled via a rotary mechanism of the central stalk subunits to proton translocation. In vivo, can only synthesize ATP although its ATP hydrolase activity can be activated artificially in vitro. Part of the complex F(0) domain. Required for dimerization of the ATP synthase complex and as such regulates ATP synthesis in the mitochondria. The chain is ATP synthase F(0) complex subunit k, mitochondrial from Homo sapiens (Human).